Consider the following 122-residue polypeptide: Small ribosomal subunit protein bS16 (122 aa).

Positions 85–122 (REAKNNPIKAKPGKRAQERAAEKAQKAADAAAAADAAE) are disordered. Basic and acidic residues predominate over residues 99 to 110 (RAQERAAEKAQK). Over residues 111–122 (AADAAAAADAAE) the composition is skewed to low complexity.

The protein belongs to the bacterial ribosomal protein bS16 family.

This Rhizobium etli (strain ATCC 51251 / DSM 11541 / JCM 21823 / NBRC 15573 / CFN 42) protein is Small ribosomal subunit protein bS16.